A 310-amino-acid polypeptide reads, in one-letter code: UDP-N-acetylenolpyruvoylglucosamine reductase (310 aa).

The region spanning 30-200 is the FAD-binding PCMH-type domain; that stretch reads RVGGPAQWLA…VAAEFQLEPG (171 aa). Arg-179 is a catalytic residue. Ser-230 functions as the Proton donor in the catalytic mechanism. Glu-300 is an active-site residue.

This sequence belongs to the MurB family. FAD serves as cofactor.

The protein localises to the cytoplasm. It carries out the reaction UDP-N-acetyl-alpha-D-muramate + NADP(+) = UDP-N-acetyl-3-O-(1-carboxyvinyl)-alpha-D-glucosamine + NADPH + H(+). It participates in cell wall biogenesis; peptidoglycan biosynthesis. Cell wall formation. This Synechococcus sp. (strain WH7803) protein is UDP-N-acetylenolpyruvoylglucosamine reductase.